The sequence spans 332 residues: Malate dehydrogenase (332 aa).

Position 15-21 (15-21) interacts with NAD(+); that stretch reads GAAGHIG. Residues Arg96 and Arg102 each contribute to the substrate site. Residues Asn109 and 133-135 contribute to the NAD(+) site; that span reads VGN. Substrate-binding residues include Asn135 and Arg166. Residue His191 is the Proton acceptor of the active site.

Belongs to the LDH/MDH superfamily. MDH type 2 family.

It carries out the reaction (S)-malate + NAD(+) = oxaloacetate + NADH + H(+). Its function is as follows. Catalyzes the reversible oxidation of malate to oxaloacetate. The sequence is that of Malate dehydrogenase from Mycolicibacterium vanbaalenii (strain DSM 7251 / JCM 13017 / BCRC 16820 / KCTC 9966 / NRRL B-24157 / PYR-1) (Mycobacterium vanbaalenii).